The chain runs to 121 residues: Small ribosomal subunit protein uS11 (121 aa).

This sequence belongs to the universal ribosomal protein uS11 family. Part of the 30S ribosomal subunit. Interacts with proteins S7 and S18. Binds to IF-3.

Its function is as follows. Located on the platform of the 30S subunit, it bridges several disparate RNA helices of the 16S rRNA. Forms part of the Shine-Dalgarno cleft in the 70S ribosome. In Mycoplasma pneumoniae (strain ATCC 29342 / M129 / Subtype 1) (Mycoplasmoides pneumoniae), this protein is Small ribosomal subunit protein uS11.